Reading from the N-terminus, the 447-residue chain is Phosphoglucosamine mutase (447 aa).

Residue S100 is the Phosphoserine intermediate of the active site. Mg(2+) is bound by residues S100, D239, D241, and D243. Phosphoserine is present on S100.

This sequence belongs to the phosphohexose mutase family. Requires Mg(2+) as cofactor. In terms of processing, activated by phosphorylation.

The enzyme catalyses alpha-D-glucosamine 1-phosphate = D-glucosamine 6-phosphate. Catalyzes the conversion of glucosamine-6-phosphate to glucosamine-1-phosphate. The chain is Phosphoglucosamine mutase from Halalkalibacterium halodurans (strain ATCC BAA-125 / DSM 18197 / FERM 7344 / JCM 9153 / C-125) (Bacillus halodurans).